We begin with the raw amino-acid sequence, 441 residues long: Asparagine--tRNA ligase, mitochondrial (441 aa).

Belongs to the class-II aminoacyl-tRNA synthetase family.

The protein localises to the mitochondrion. It catalyses the reaction tRNA(Asn) + L-asparagine + ATP = L-asparaginyl-tRNA(Asn) + AMP + diphosphate + H(+). This is Asparagine--tRNA ligase, mitochondrial (slm5) from Schizosaccharomyces pombe (strain 972 / ATCC 24843) (Fission yeast).